Reading from the N-terminus, the 110-residue chain is UPF0122 protein SAR1212 (110 aa).

Belongs to the UPF0122 family.

Functionally, might take part in the signal recognition particle (SRP) pathway. This is inferred from the conservation of its genetic proximity to ftsY/ffh. May be a regulatory protein. In Staphylococcus aureus (strain MRSA252), this protein is UPF0122 protein SAR1212.